Here is a 480-residue protein sequence, read N- to C-terminus: G-rich sequence factor 1 (480 aa).

The N-terminal 117 residues, 1–117 (MAGTRWVLGA…AAAAVPTRSY (117 aa)), are a transit peptide targeting the mitochondrion. RRM domains follow at residues 122–246 (KTTY…SSPV) and 250–326 (GVVR…PSRR). Ser244 is modified (phosphoserine). Phosphoserine is present on Ser335. One can recognise an RRM 3 domain in the interval 401–480 (HFVHMRGLPF…LFLNSCPKGK (80 aa)).

In terms of assembly, monomer. Found in a complex with DDX28, DHX30, FASTKD2 and FASTKD5. Interacts with the mitochondrial RNase P complex subunit TRMT10C/MRPP1. Interacts with the 2 components of the mitochondrial degradosome complex, PNPT1 and SUPV3L1, in an RNA-dependent manner.

Its subcellular location is the mitochondrion matrix. It localises to the cytoplasm. Functionally, regulator of post-transcriptional mitochondrial gene expression, required for assembly of the mitochondrial ribosome and for recruitment of mRNA and lncRNA. Binds RNAs containing the 14 base G-rich element. Preferentially binds RNAs transcribed from three contiguous genes on the light strand of mtDNA, the ND6 mRNA, and the long non-coding RNAs for MT-CYB and MT-ND5, each of which contains multiple consensus binding sequences. Involved in the degradosome-mediated decay of non-coding mitochondrial transcripts (MT-ncRNA) and tRNA-like molecules. Acts by unwinding G-quadruplex RNA structures in MT-ncRNA, thus facilitating their degradation by the degradosome. G-quadruplexes (G4) are non-canonical 4 stranded structures formed by transcripts from the light strand of mtDNA. The chain is G-rich sequence factor 1 (GRSF1) from Homo sapiens (Human).